The primary structure comprises 154 residues: Transmembrane protein 35B (154 aa).

Positions 1–22 (MALLLSVLRVLLGGFFALVGLA) are cleaved as a signal peptide. 3 helical membrane-spanning segments follow: residues 63–83 (IAVG…PPML), 85–105 (EISN…LAAL), and 112–132 (CIPA…QLLA).

It belongs to the DoxX family.

Its subcellular location is the membrane. In Homo sapiens (Human), this protein is Transmembrane protein 35B.